The following is a 115-amino-acid chain: Holo-[acyl-carrier-protein] synthase (115 aa).

Mg(2+)-binding residues include Asp-6 and Glu-51.

The protein belongs to the P-Pant transferase superfamily. AcpS family. Mg(2+) serves as cofactor.

It is found in the cytoplasm. The enzyme catalyses apo-[ACP] + CoA = holo-[ACP] + adenosine 3',5'-bisphosphate + H(+). Its function is as follows. Transfers the 4'-phosphopantetheine moiety from coenzyme A to a Ser of acyl-carrier-protein. The sequence is that of Holo-[acyl-carrier-protein] synthase from Campylobacter jejuni subsp. jejuni serotype O:2 (strain ATCC 700819 / NCTC 11168).